A 235-amino-acid chain; its full sequence is Segregation and condensation protein A (235 aa).

Belongs to the ScpA family. In terms of assembly, component of a cohesin-like complex composed of ScpA, ScpB and the Smc homodimer, in which ScpA and ScpB bind to the head domain of Smc. The presence of the three proteins is required for the association of the complex with DNA.

The protein resides in the cytoplasm. Functionally, participates in chromosomal partition during cell division. May act via the formation of a condensin-like complex containing Smc and ScpB that pull DNA away from mid-cell into both cell halves. In Streptococcus agalactiae serotype Ia (strain ATCC 27591 / A909 / CDC SS700), this protein is Segregation and condensation protein A.